Reading from the N-terminus, the 258-residue chain is Synapse differentiation-inducing gene protein 1 (258 aa).

The Cytoplasmic portion of the chain corresponds to 1 to 181; that stretch reads MDGIIEQKSM…NFLMMPPRDH (181 aa). S137 carries the post-translational modification Phosphoserine. Residues 182–202 form a helical membrane-spanning segment; the sequence is LGLSVFSMLCCFWPLGIAAFY. The Extracellular portion of the chain corresponds to 203–228; it reads LSHETNKAVAKGDLHQASTSSRRALF. The segment at residues 229–249 is an intramembrane region (helical); the sequence is LAVLSITIGTGVYVGVAVALI. The Extracellular segment spans residues 250–258; sequence AYLSKNNHL.

Belongs to the CD225/Dispanin family. In terms of assembly, homodimer. Interacts with GRIA1 and GRIA2.

The protein resides in the cell membrane. The protein localises to the early endosome membrane. It is found in the postsynaptic density membrane. Its subcellular location is the synapse. It localises to the cell projection. The protein resides in the dendrite. The protein localises to the dendritic spine. Functionally, may regulate AMPA receptor content at nascent synapses, and have a role in postsynaptic development and maturation. The polypeptide is Synapse differentiation-inducing gene protein 1 (SYNDIG1) (Macaca fascicularis (Crab-eating macaque)).